The sequence spans 156 residues: Small ribosomal subunit protein uS7 (156 aa).

It belongs to the universal ribosomal protein uS7 family. Part of the 30S ribosomal subunit. Contacts proteins S9 and S11.

Functionally, one of the primary rRNA binding proteins, it binds directly to 16S rRNA where it nucleates assembly of the head domain of the 30S subunit. Is located at the subunit interface close to the decoding center, probably blocks exit of the E-site tRNA. The sequence is that of Small ribosomal subunit protein uS7 from Brucella abortus (strain S19).